Reading from the N-terminus, the 342-residue chain is Cytosolic Fe-S cluster assembly factor NBP35 (342 aa).

The tract at residues 16-42 is disordered; that stretch reads SKAAPKLVAPEPEHCPGPESEQAGKGD. 4 residues coordinate [4Fe-4S] cluster: Cys30, Cys44, Cys47, and Cys53. 83–90 lines the ATP pocket; the sequence is GKGGVGKS. The [4Fe-4S] cluster site is built by Cys256 and Cys259.

Belongs to the Mrp/NBP35 ATP-binding proteins family. NUBP1/NBP35 subfamily. In terms of assembly, heterotetramer of 2 NBP35 and 2 CFD1 chains. Requires [4Fe-4S] cluster as cofactor.

It is found in the cytoplasm. Component of the cytosolic iron-sulfur (Fe/S) protein assembly (CIA) machinery. Required for maturation of extramitochondrial Fe-S proteins. The NBP35-CFD1 heterotetramer forms a Fe-S scaffold complex, mediating the de novo assembly of an Fe-S cluster and its transfer to target apoproteins. The protein is Cytosolic Fe-S cluster assembly factor NBP35 of Coccidioides immitis (strain RS) (Valley fever fungus).